Reading from the N-terminus, the 267-residue chain is 3-methyl-2-oxobutanoate hydroxymethyltransferase (267 aa).

Mg(2+) contacts are provided by Asp-45 and Asp-84. Residues 45-46 (DS), Asp-84, and Lys-113 each bind 3-methyl-2-oxobutanoate. Glu-115 is a binding site for Mg(2+). Glu-182 acts as the Proton acceptor in catalysis.

The protein belongs to the PanB family. Homodecamer; pentamer of dimers. The cofactor is Mg(2+).

Its subcellular location is the cytoplasm. The catalysed reaction is 3-methyl-2-oxobutanoate + (6R)-5,10-methylene-5,6,7,8-tetrahydrofolate + H2O = 2-dehydropantoate + (6S)-5,6,7,8-tetrahydrofolate. The protein operates within cofactor biosynthesis; coenzyme A biosynthesis. Catalyzes the reversible reaction in which hydroxymethyl group from 5,10-methylenetetrahydrofolate is transferred onto alpha-ketoisovalerate to form ketopantoate. The chain is 3-methyl-2-oxobutanoate hydroxymethyltransferase from Saccharolobus islandicus (strain Y.G.57.14 / Yellowstone #1) (Sulfolobus islandicus).